We begin with the raw amino-acid sequence, 1086 residues long: Isoleucine--tRNA ligase (1086 aa).

The 'HIGH' region motif lies at 53–63; it reads PFANGLPHYGH. A 'KMSKS' region motif is present at residues 624-628; it reads KLSKR. Residue lysine 627 coordinates ATP.

It belongs to the class-I aminoacyl-tRNA synthetase family. IleS type 2 subfamily. In terms of assembly, monomer. The cofactor is Zn(2+).

The protein resides in the cytoplasm. The catalysed reaction is tRNA(Ile) + L-isoleucine + ATP = L-isoleucyl-tRNA(Ile) + AMP + diphosphate. Functionally, catalyzes the attachment of isoleucine to tRNA(Ile). As IleRS can inadvertently accommodate and process structurally similar amino acids such as valine, to avoid such errors it has two additional distinct tRNA(Ile)-dependent editing activities. One activity is designated as 'pretransfer' editing and involves the hydrolysis of activated Val-AMP. The other activity is designated 'posttransfer' editing and involves deacylation of mischarged Val-tRNA(Ile). In Rickettsia typhi (strain ATCC VR-144 / Wilmington), this protein is Isoleucine--tRNA ligase.